Consider the following 221-residue polypeptide: SIN3-HDAC complex-associated factor (221 aa).

The span at Gln-112–Asp-121 shows a compositional bias: basic and acidic residues. Disordered stretches follow at residues Gln-112–Gly-152 and Ala-201–Trp-221. Low complexity predominate over residues Ser-124 to Pro-135. A compositionally biased stretch (polar residues) spans Cys-136–Gly-152.

It belongs to the SINHCAF family. In terms of assembly, interacts with the Sin3/HDAC corepressor complex at least composed of BRMS1, BRMS1L, ING2, SAP30, SAP30L and HDAC1. Found in a complex composed of at least SINHCAF, SIN3A, HDAC1, SAP30, RBBP4, OGT and TET1. Interacts with SIN3A and OGT.

It is found in the nucleus. In terms of biological role, subunit of the Sin3 deacetylase complex (Sin3/HDAC), this subunit is important for the repression of genes encoding components of the TGF-beta signaling pathway. Core component of a SIN3A complex (composed of at least SINHCAF, SIN3A, HDAC1, SAP30, RBBP4, OGT and TET1) present in embryonic stem (ES) cells. Promotes the stability of SIN3A and its presence on chromatin and is essential for maintaining the potential of ES cells to proliferate rapidly, while ensuring a short G1-phase of the cell cycle, thereby preventing premature lineage priming. The protein is SIN3-HDAC complex-associated factor of Homo sapiens (Human).